A 132-amino-acid chain; its full sequence is ALYNVENQWGGSSAPWNEGGQWEIGSRSDQNVVAINVESGDDGQTLNGTMTYAGEGPIGFRATLLGNNSYEVENQWGGDSAPWHSGGNWILGSRENQNVVAINVESGDDGQTLNGTMTYAGEGPIGFKGTTL.

Repeat copies occupy residues 1–66 (ALYN…TLLG) and 67–132 (NNSY…GTTL). The 2 X approximate tandem repeats stretch occupies residues 1 to 132 (ALYNVENQWG…GPIGFKGTTL (132 aa)).

In terms of assembly, monomer.

Lectin specific for high mannose N-glycans, recognizes the branched moiety of these glycans. Does not recognize other types of N-glycans or monosaccharides. Agglutinates trypsin-treated rabbit erythrocytes. Does not require divalent cations for activity. Inhibits HIV replication in MT4 cells with an EC(50) of 45 nM. Binds to the HIV envelope glycoprotein gp120. The polypeptide is Lectin OAA (Planktothrix agardhii (Oscillatoria agardhii)).